A 120-amino-acid chain; its full sequence is Large ribosomal subunit protein uL18 (120 aa).

This sequence belongs to the universal ribosomal protein uL18 family. As to quaternary structure, part of the 50S ribosomal subunit; part of the 5S rRNA/L5/L18/L25 subcomplex. Contacts the 5S and 23S rRNAs.

This is one of the proteins that bind and probably mediate the attachment of the 5S RNA into the large ribosomal subunit, where it forms part of the central protuberance. In Gluconobacter oxydans (strain 621H) (Gluconobacter suboxydans), this protein is Large ribosomal subunit protein uL18.